Here is a 933-residue protein sequence, read N- to C-terminus: Collagen alpha-2(I) chain (933 aa).

Over residues 1-16 (SGGFDFGVGLGPGPMG) the composition is skewed to gly residues. Disordered regions lie at residues 1–191 (SGGF…LTGA) and 206–933 (LPGP…AGVR). Positions 17-53 (LMGPRGPPGASGAPGPQGFQGPAGEPGEPGQTGPAGA) are enriched in low complexity. 2 positions are modified to 4-hydroxyproline: proline 24 and proline 30. Residues 57–72 (KAGEDGHPGKPGRPGE) are compositionally biased toward basic and acidic residues. At lysine 94 the chain carries 5-hydroxylysine; alternate. O-linked (Gal...) hydroxylysine; alternate glycosylation occurs at lysine 94. Composition is skewed to low complexity over residues 108 to 137 (VGAP…SAGP), 162 to 176 (AGPR…VSGP), and 213 to 228 (PGPV…RGLV). Residues 280-289 (GLRGGPGSRG) are compositionally biased toward gly residues. 2 positions are modified to 4-hydroxyproline: proline 317 and proline 320. The span at 413–422 (GVQGGKGEQG) shows a compositional bias: gly residues. Composition is skewed to low complexity over residues 468–485 (PGES…SRGP) and 497–507 (EPGVVGAPGTA). Residues 508 to 517 (GPAGSGGLPG) show a composition bias toward gly residues. Low complexity-rich tracts occupy residues 540–584 (VGTT…PRGS), 591–611 (VGPA…QPGA), and 627–640 (PTGP…SGPN). Over residues 644 to 656 (GPAGGRGDGGPPG) the composition is skewed to gly residues. Residues 657–667 (LTGFPGAAGRT) are compositionally biased toward low complexity. Residues 704–713 (GETGAGGPPG) are compositionally biased toward gly residues. Composition is skewed to low complexity over residues 721–748 (SGEP…LGLP) and 756–781 (LPGV…RGPS). Residues 795-807 (AGRDGLPGHKGER) are compositionally biased toward basic and acidic residues. 2 stretches are compositionally biased toward low complexity: residues 809–831 (YAGN…VGPA) and 840–860 (PGPA…PSGP). Residues 864-874 (RGDKGEGDKGP) show a composition bias toward basic and acidic residues.

Belongs to the fibrillar collagen family. As to quaternary structure, trimers of one alpha 2(I) and two alpha 1(I) chains. Interacts (via C-terminus) with TMEM131 (via PapD-L domain); the interaction is direct and is involved in assembly and TRAPPIII ER-to-Golgi transport complex-dependent secretion of collagen. Post-translationally, prolines at the third position of the tripeptide repeating unit (G-X-Y) are hydroxylated in some or all of the chains. Expressed in bones.

It localises to the secreted. Its subcellular location is the extracellular space. It is found in the extracellular matrix. Type I collagen is a member of group I collagen (fibrillar forming collagen). This chain is Collagen alpha-2(I) chain, found in Glyptodon sp. (strain SLP-2019) (Giant armadillo).